The primary structure comprises 125 residues: Multifunctional methyltransferase subunit TRM112-like protein (125 aa).

Positions 2–119 constitute a TRM112 domain; that stretch reads KLLTHNLLSS…SRGIPNMLLS (118 aa). Residues S119 and S125 each carry the phosphoserine modification.

This sequence belongs to the TRM112 family. In terms of assembly, part of the heterodimeric BUD23-TRM112 methyltransferase complex; this heterodimerization is necessary for the metabolic stability and activity of the catalytic subunit BUD23. Part of the heterodimeric N6AMT1-TRM112 methyltransferase complex; this heterodimerization is necessary for S-adenosyl-L-methionine-binding to N6AMT1/HEMK2. Part of the heterodimeric ALKBH8-TRM112 methyltransferase complex. Part of the heterodimeric METTL5-TRM112 methyltransferase complex; this heterodimerization is necessary for the stability of the catalytic subunit METTL5. Part of the heterodimeric THUMPD3-TRM112 methyltransferase complex; this complex forms an active tRNA methyltransferase, where TRMT112 acts as an activator of the catalytic subunit THUMPD3. Part of the heterodimeric THUMPD2-TRM112 methyltransferase complex; this complex forms an active tRNA methyltransferase, where TRMT112 acts as an activator of the catalytic subunit THUMPD2. Part of the heterodimeric TRMT11-TRM112 methyltransferase complex; this complex forms an active tRNA methyltransferase, where TRMT112 acts as an activator of the catalytic subunit TRMT11.

Its subcellular location is the nucleus. The protein localises to the nucleoplasm. It is found in the cytoplasm. It localises to the perinuclear region. Its function is as follows. Acts as an activator of both rRNA/tRNA and protein methyltransferases. Together with methyltransferase BUD23, methylates the N(7) position of a guanine in 18S rRNA. The heterodimer with N6AMT1/HEMK2 catalyzes N5-methylation of ETF1 on 'Gln-185', using S-adenosyl L-methionine as methyl donor. The heterodimer with N6AMT1/HEMK2 also monomethylates 'Lys-12' of histone H4 (H4K12me1). The heterodimer with ALKBH8 catalyzes the methylation of 5-carboxymethyl uridine to 5-methylcarboxymethyl uridine at the wobble position of the anticodon loop in target tRNA species. Together with methyltransferase THUMPD3, catalyzes the formation of N(2)-methylguanosine at position 6 in a broad range of tRNA substrates and at position 7 of tRNA(Trp). Involved in the pre-rRNA processing steps leading to small-subunit rRNA production. Together with methyltransferase METTL5, specifically methylates the 6th position of adenine in position 1832 of 18S rRNA. This Homo sapiens (Human) protein is Multifunctional methyltransferase subunit TRM112-like protein.